The following is a 349-amino-acid chain: ATPase GET3 (349 aa).

Residue 26 to 33 (KGGVGKTT) coordinates ATP. D57 is an active-site residue. ATP contacts are provided by E242 and N269. Residues C281 and C284 each coordinate Zn(2+).

This sequence belongs to the arsA ATPase family. Homodimer. Component of the Golgi to ER traffic (GET) complex, which is composed of GET1, GET2 and GET3. Within the complex, GET1 and GET2 form a heterotetramer which is stabilized by phosphatidylinositol binding and which binds to the GET3 homodimer. Interacts with the chloride channel protein GEF1.

The protein resides in the cytoplasm. The protein localises to the endoplasmic reticulum. Its subcellular location is the golgi apparatus. Functionally, ATPase required for the post-translational delivery of tail-anchored (TA) proteins to the endoplasmic reticulum. Recognizes and selectively binds the transmembrane domain of TA proteins in the cytosol. This complex then targets to the endoplasmic reticulum by membrane-bound receptors GET1 and GET2, where the tail-anchored protein is released for insertion. This process is regulated by ATP binding and hydrolysis. ATP binding drives the homodimer towards the closed dimer state, facilitating recognition of newly synthesized TA membrane proteins. ATP hydrolysis is required for insertion. Subsequently, the homodimer reverts towards the open dimer state, lowering its affinity for the GET1-GET2 receptor, and returning it to the cytosol to initiate a new round of targeting. Cooperates with the HDEL receptor ERD2 to mediate the ATP-dependent retrieval of resident ER proteins that contain a C-terminal H-D-E-L retention signal from the Golgi to the ER. Involved in low-level resistance to the oxyanions arsenite and arsenate, and in heat tolerance. The protein is ATPase GET3 of Lodderomyces elongisporus (strain ATCC 11503 / CBS 2605 / JCM 1781 / NBRC 1676 / NRRL YB-4239) (Yeast).